The following is a 241-amino-acid chain: Large ribosomal subunit protein uL3 (241 aa).

Disordered stretches follow at residues 139-166 (VSHRSIGSTGGRQDPGKTFKNKKMPGHM) and 209-241 (KKPLPKDAPKPGKFKVAGDDKVTADAPTEKEGA). Glutamine 151 carries the N5-methylglutamine modification.

Belongs to the universal ribosomal protein uL3 family. As to quaternary structure, part of the 50S ribosomal subunit. Forms a cluster with proteins L14 and L19. Post-translationally, methylated by PrmB.

One of the primary rRNA binding proteins, it binds directly near the 3'-end of the 23S rRNA, where it nucleates assembly of the 50S subunit. The polypeptide is Large ribosomal subunit protein uL3 (Nitrobacter hamburgensis (strain DSM 10229 / NCIMB 13809 / X14)).